A 147-amino-acid chain; its full sequence is Large ribosomal subunit protein bL9 (147 aa).

This sequence belongs to the bacterial ribosomal protein bL9 family.

Binds to the 23S rRNA. In Thermoanaerobacter pseudethanolicus (strain ATCC 33223 / 39E) (Clostridium thermohydrosulfuricum), this protein is Large ribosomal subunit protein bL9.